Consider the following 299-residue polypeptide: Large ribosomal subunit protein uL18 (299 aa).

It belongs to the universal ribosomal protein uL18 family. Component of the large ribosomal subunit (LSU).

The protein resides in the cytoplasm. Its subcellular location is the nucleus. Component of the ribosome, a large ribonucleoprotein complex responsible for the synthesis of proteins in the cell. The small ribosomal subunit (SSU) binds messenger RNAs (mRNAs) and translates the encoded message by selecting cognate aminoacyl-transfer RNA (tRNA) molecules. The large subunit (LSU) contains the ribosomal catalytic site termed the peptidyl transferase center (PTC), which catalyzes the formation of peptide bonds, thereby polymerizing the amino acids delivered by tRNAs into a polypeptide chain. The nascent polypeptides leave the ribosome through a tunnel in the LSU and interact with protein factors that function in enzymatic processing, targeting, and the membrane insertion of nascent chains at the exit of the ribosomal tunnel. The sequence is that of Large ribosomal subunit protein uL18 (RpL5) from Bombyx mori (Silk moth).